The primary structure comprises 366 residues: MADQNINKNEKVLTGQPTENQEPVHKRRERYKGTHPKTFKEKYKERQPEKYADTIEKVIQKGSTPAGMHISICVNEILEFLQIKPGQKGLDATLGYGGHTREMLKCLESQGHMYALDVDPIEIVKTRERLQNLGFGPEILTIKQLNFANIDEVVEEAGLFDFVLADLGVSSMQIDDPDRGFSFKTDGPLDLRLNPEKGISAAERLKTISQTELQGMLLENSDEPYSEEISKAIVNEIKRGNEIDTTTKLRDLISKVLVTIPENEQKEAIKKTCQRTFQALRIDVNNEYEVLYSFLEKLPNVLAKGGRVAILTFHSGEDRLVKKSFKNLQRAGIYSEVSDDVIRPSAEECNRNPRARSTKMRWAIKA.

A disordered region spans residues 1–46; the sequence is MADQNINKNEKVLTGQPTENQEPVHKRRERYKGTHPKTFKEKYKER. The segment covering 25–37 has biased composition (basic residues); sequence HKRRERYKGTHPK. S-adenosyl-L-methionine is bound by residues 97-99, Asp-117, Phe-147, Asp-166, and Gln-173; that span reads GGH.

This sequence belongs to the methyltransferase superfamily. RsmH family.

The protein resides in the cytoplasm. It catalyses the reaction cytidine(1402) in 16S rRNA + S-adenosyl-L-methionine = N(4)-methylcytidine(1402) in 16S rRNA + S-adenosyl-L-homocysteine + H(+). Its function is as follows. Specifically methylates the N4 position of cytidine in position 1402 (C1402) of 16S rRNA. In Lachnoclostridium phytofermentans (strain ATCC 700394 / DSM 18823 / ISDg) (Clostridium phytofermentans), this protein is Ribosomal RNA small subunit methyltransferase H 1.